We begin with the raw amino-acid sequence, 432 residues long: Adenosine 3'-phospho 5'-phosphosulfate transporter 1 (432 aa).

9 helical membrane passes run 5–25 (WWAVVVLAAFPSLGAGGETPE), 40–60 (VVNAAGYASFMVPGYLLVQYF), 109–129 (ALKLLFCATGLQVSYLTWGVL), 154–174 (FLVLMNRVLALIVAGLSCVLC), 238–258 (WEYLTATLISIGVSMFLLSSG), 265–285 (PATTLSGLILLAGYIAFDSFT), 299–319 (SVQMMFGVNFFSCLFTVGSLL), 353–373 (LFIFYTIGQFGAAVFTIIMTL), and 387–407 (GHTVTVVGGLGVAVVFAALLL). Ser-427 carries the phosphoserine modification.

This sequence belongs to the nucleotide-sugar transporter family. SLC35B subfamily.

It is found in the golgi apparatus membrane. It catalyses the reaction 3'-phosphoadenylyl sulfate(in) + adenosine 3',5'-bisphosphate(out) = 3'-phosphoadenylyl sulfate(out) + adenosine 3',5'-bisphosphate(in). Probably functions as a 3'-phosphoadenylyl sulfate:adenosine 3',5'-bisphosphate antiporter at the Golgi membranes. Mediates the transport from the cytosol into the lumen of the Golgi of 3'-phosphoadenylyl sulfate/adenosine 3'-phospho 5'-phosphosulfate (PAPS), a universal sulfuryl donor for sulfation events that take place in that compartment. In Pongo abelii (Sumatran orangutan), this protein is Adenosine 3'-phospho 5'-phosphosulfate transporter 1.